We begin with the raw amino-acid sequence, 748 residues long: Formate acetyltransferase (748 aa).

One can recognise a PFL domain in the interval 5 to 618 (NNHTNAWQGF…KTGNTPDGRK (614 aa)). Residue cysteine 412 is the S-acetylcysteine intermediate of the active site. Cysteine 413 acts as the Cysteine radical intermediate in catalysis. In terms of domain architecture, Glycine radical spans 625–748 (PGANPMHGRD…VISRTFHESM (124 aa)). Glycine 723 carries the post-translational modification Glycine radical.

It belongs to the glycyl radical enzyme (GRE) family. PFL subfamily. In terms of assembly, homodimer.

It localises to the cytoplasm. The enzyme catalyses formate + acetyl-CoA = pyruvate + CoA. Its pathway is fermentation; pyruvate fermentation; formate from pyruvate: step 1/1. Functionally, catalyzes the conversion of pyruvate to formate and acetyl-CoA. The sequence is that of Formate acetyltransferase (pflB) from Staphylococcus epidermidis (strain ATCC 12228 / FDA PCI 1200).